A 106-amino-acid polypeptide reads, in one-letter code: Tubulin-specific chaperone A (106 aa).

Ser-94 carries the phosphoserine modification.

It belongs to the TBCA family.

It localises to the cytoplasm. The protein resides in the cytoskeleton. In terms of biological role, tubulin-folding protein; involved in the early step of the tubulin folding pathway. This is Tubulin-specific chaperone A (RBL2) from Saccharomyces cerevisiae (strain ATCC 204508 / S288c) (Baker's yeast).